A 569-amino-acid polypeptide reads, in one-letter code: 2-succinyl-5-enolpyruvyl-6-hydroxy-3-cyclohexene-1-carboxylate synthase (569 aa).

Belongs to the TPP enzyme family. MenD subfamily. In terms of assembly, homodimer. Mg(2+) serves as cofactor. Requires Mn(2+) as cofactor. It depends on thiamine diphosphate as a cofactor.

The catalysed reaction is isochorismate + 2-oxoglutarate + H(+) = 5-enolpyruvoyl-6-hydroxy-2-succinyl-cyclohex-3-ene-1-carboxylate + CO2. It functions in the pathway quinol/quinone metabolism; 1,4-dihydroxy-2-naphthoate biosynthesis; 1,4-dihydroxy-2-naphthoate from chorismate: step 2/7. The protein operates within quinol/quinone metabolism; menaquinone biosynthesis. Its function is as follows. Catalyzes the thiamine diphosphate-dependent decarboxylation of 2-oxoglutarate and the subsequent addition of the resulting succinic semialdehyde-thiamine pyrophosphate anion to isochorismate to yield 2-succinyl-5-enolpyruvyl-6-hydroxy-3-cyclohexene-1-carboxylate (SEPHCHC). The protein is 2-succinyl-5-enolpyruvyl-6-hydroxy-3-cyclohexene-1-carboxylate synthase of Shewanella sediminis (strain HAW-EB3).